Here is a 538-residue protein sequence, read N- to C-terminus: Mitochondria-eating protein (538 aa).

The segment at 1–273 is interaction with YWHAG/14-3-3 protein gamma; the sequence is MAENLKRLVS…PRSRSCSRSR (273 aa). Ser85 is subject to Phosphoserine. The segment at 92–137 is disordered; it reads GKPVDSKVPSLQNTFDRERRKDPSPRDRDMQQLDSNLNSTRSQLNQ. Over residues 106-122 the composition is skewed to basic and acidic residues; it reads FDRERRKDPSPRDRDMQ. 2 coiled-coil regions span residues 118–186 and 220–256; these read DRDM…ARHR and QRDT…RSSR. Residues 123-137 show a composition bias toward polar residues; the sequence is QLDSNLNSTRSQLNQ. A phosphoserine mark is found at Ser156 and Ser159. Disordered stretches follow at residues 174–227 and 247–292; these read LKTL…EVTS and KSAL…NRSK. Composition is skewed to basic and acidic residues over residues 181–209 and 216–227; these read EDAR…RRCE and RNADQRDTEVTS. A compositionally biased stretch (low complexity) spans 253-278; the sequence is RSSRSRSPSPAPRSRSCSRSRSASPS. Phosphoserine occurs at positions 285, 287, and 509.

Belongs to the MIEAP family. Interacts (via coiled-coil domains) with BNIP3L (via BH3 domain). Interacts (via coiled-coil domains) with BNIP3 (via BH3 domain). Interacts with YWHAG/14-3-3 protein gamma; a protein that also plays a role in MALM.

Its subcellular location is the cytoplasm. It localises to the cytosol. It is found in the mitochondrion outer membrane. The protein localises to the mitochondrion matrix. In terms of biological role, key regulator of mitochondrial quality that mediates the repairing or degradation of unhealthy mitochondria in response to mitochondrial damage. Mediator of mitochondrial protein catabolic process (also named MALM) by mediating the degradation of damaged proteins inside mitochondria by promoting the accumulation in the mitochondrial matrix of hydrolases that are characteristic of the lysosomal lumen. Also involved in mitochondrion degradation of damaged mitochondria by promoting the formation of vacuole-like structures (named MIV), which engulf and degrade unhealthy mitochondria by accumulating lysosomes. The physical interaction of SPATA18/MIEAP, BNIP3 and BNIP3L/NIX at the mitochondrial outer membrane regulates the opening of a pore in the mitochondrial double membrane in order to mediate the translocation of lysosomal proteins from the cytoplasm to the mitochondrial matrix. Binds cardiolipin. May form molecular condensates (non-membrane-bounded organelles) within mitochondria that compartmentalize and promote cardiolipin metabolism. The protein is Mitochondria-eating protein (SPATA18) of Macaca fascicularis (Crab-eating macaque).